A 299-amino-acid chain; its full sequence is Epimerase family protein SH2119 (299 aa).

This sequence belongs to the NAD(P)-dependent epimerase/dehydratase family. SDR39U1 subfamily.

The polypeptide is Epimerase family protein SH2119 (Staphylococcus haemolyticus (strain JCSC1435)).